Reading from the N-terminus, the 107-residue chain is Protein Rev (107 aa).

Ser5 is subject to Phosphoserine; by host CK2. Residues 18–26 (AIKILYQSN) are homomultimerization. 2 disordered regions span residues 24–48 (QSNP…WRAR) and 82–107 (HLDC…VGRS). Positions 34 to 50 (TRQARRNRRRRWRARQR) match the Nuclear localization signal and RNA-binding (RRE) motif. Residues 36-48 (QARRNRRRRWRAR) are compositionally biased toward basic residues. A Nuclear export signal and binding to XPO1 motif is present at residues 73 to 84 (LQLPPLERLHLD). Positions 88-101 (DSGTSGTQQPQGTE) are enriched in polar residues. Residue Ser92 is modified to Phosphoserine; by host.

Belongs to the HIV-1 REV protein family. In terms of assembly, homomultimer; when bound to the RRE. Multimeric assembly is essential for activity and may involve XPO1. Binds to human KPNB1, XPO1, TNPO1, RANBP5 and IPO7. Interacts with the viral Integrase. Interacts with human KHDRBS1. Interacts with human NAP1; this interaction decreases Rev multimerization and stimulates its activity. Interacts with human DEAD-box helicases DDX3 and DDX24; these interactions may serve for viral RNA export to the cytoplasm and packaging, respectively. Interacts with human PSIP1; this interaction may inhibit HIV-1 DNA integration by promoting dissociation of the Integrase-LEDGF/p75 complex. Post-translationally, asymmetrically arginine dimethylated at one site by host PRMT6. Methylation impairs the RNA-binding activity and export of viral RNA from the nucleus to the cytoplasm. In terms of processing, phosphorylated by protein kinase CK2. Presence of, and maybe binding to the N-terminus of the regulatory beta subunit of CK2 is necessary for CK2-mediated Rev's phosphorylation.

It localises to the host nucleus. The protein resides in the host nucleolus. Its subcellular location is the host cytoplasm. In terms of biological role, escorts unspliced or incompletely spliced viral pre-mRNAs (late transcripts) out of the nucleus of infected cells. These pre-mRNAs carry a recognition sequence called Rev responsive element (RRE) located in the env gene, that is not present in fully spliced viral mRNAs (early transcripts). This function is essential since most viral proteins are translated from unspliced or partially spliced pre-mRNAs which cannot exit the nucleus by the pathway used by fully processed cellular mRNAs. Rev itself is translated from a fully spliced mRNA that readily exits the nucleus. Rev's nuclear localization signal (NLS) binds directly to KPNB1/Importin beta-1 without previous binding to KPNA1/Importin alpha-1. KPNB1 binds to the GDP bound form of RAN (Ran-GDP) and targets Rev to the nucleus. In the nucleus, the conversion from Ran-GDP to Ran-GTP dissociates Rev from KPNB1 and allows Rev's binding to the RRE in viral pre-mRNAs. Rev multimerization on the RRE via cooperative assembly exposes its nuclear export signal (NES) to the surface. Rev can then form a complex with XPO1/CRM1 and Ran-GTP, leading to nuclear export of the complex. Conversion from Ran-GTP to Ran-GDP mediates dissociation of the Rev/RRE/XPO1/RAN complex, so that Rev can return to the nucleus for a subsequent round of export. Beside KPNB1, also seems to interact with TNPO1/Transportin-1, RANBP5/IPO5 and IPO7/RANBP7 for nuclear import. The nucleoporin-like HRB/RIP is an essential cofactor that probably indirectly interacts with Rev to release HIV RNAs from the perinuclear region to the cytoplasm. The polypeptide is Protein Rev (Human immunodeficiency virus type 1 group M subtype G (isolate SE6165) (HIV-1)).